The primary structure comprises 1002 residues: Calmin (1002 aa).

The tract at residues 1–288 (MAAHEWDWFQ…IMTYVAQFLE (288 aa)) is actin-binding. The Calponin-homology (CH) 1 domain occupies 32 to 139 (NVQKRTFTRW…LIWNIILFFQ (108 aa)). A compositionally biased stretch (low complexity) spans 149 to 168 (RNSPSSSLSPGSGGTDSDSS). The segment at 149-180 (RNSPSSSLSPGSGGTDSDSSFPPTPTAERSVA) is disordered. A Calponin-homology (CH) 2 domain is found at 187-291 (RKAIKALLAW…YVAQFLERFP (105 aa)). Residues Ser301 and Ser402 each carry the phosphoserine modification. Disordered regions lie at residues 389 to 418 (QGGP…GRSN), 500 to 532 (NNNS…GENT), 581 to 716 (NKVP…SPPL), and 749 to 911 (DLKN…DSSI). Low complexity predominate over residues 396–409 (SDISEPSPESSILS). Residues 500–509 (NNNSQSSSCN) are compositionally biased toward polar residues. The segment covering 585–606 (SPHETKPDEDAEAFENHAEKLG) has biased composition (basic and acidic residues). Residues 607 to 617 (KRSIKSAHKKK) show a composition bias toward basic residues. 2 stretches are compositionally biased toward basic and acidic residues: residues 618 to 635 (DSPE…HQDS) and 650 to 659 (PVDKKPEVHE). Position 619 is a phosphoserine (Ser619). Positions 681–697 (GVGEELSSSPPSSCVSL) are enriched in low complexity. A Phosphothreonine modification is found at Thr699. Phosphoserine is present on residues Ser713 and Ser769. Residues 776-794 (GSQSSSSSSVPGESLPSAS) show a composition bias toward low complexity. A compositionally biased stretch (basic and acidic residues) spans 818 to 834 (PHEDHQQRETKENDPMD). The span at 835–846 (SHQSQESPNLEN) shows a compositional bias: polar residues. 2 positions are modified to phosphoserine: Ser838 and Ser841. Basic and acidic residues predominate over residues 854-863 (NVTKESISSK). The segment covering 898–910 (YSIPSRTSHSDSS) has biased composition (polar residues). Residue Ser907 is modified to Phosphoserine. The helical; Anchor for type IV membrane protein transmembrane segment at 977–997 (MMYFILFLWLLVYCLLLFPQL) threads the bilayer.

In terms of tissue distribution, widely expressed at intermediate level.

The protein localises to the membrane. The chain is Calmin (CLMN) from Homo sapiens (Human).